The sequence spans 366 residues: Acetylserotonin O-methyltransferase 2 (366 aa).

Positions 209, 232, 253, and 267 each coordinate S-adenosyl-L-homocysteine. The active-site Proton acceptor is the His-271. Active-site residues include Glu-302 and Glu-332.

It belongs to the class I-like SAM-binding methyltransferase superfamily. Cation-independent O-methyltransferase family. As to quaternary structure, homodimer. In terms of tissue distribution, expressed in roots, leaves, stems and flowers.

It is found in the cytoplasm. It carries out the reaction N-acetylserotonin + S-adenosyl-L-methionine = melatonin + S-adenosyl-L-homocysteine + H(+). It functions in the pathway aromatic compound metabolism; melatonin biosynthesis; melatonin from serotonin: step 1/2. Methyltransferase which catalyzes the transfer of a methyl group onto N-acetylserotonin, producing melatonin (N-acetyl-5-methoxytryptamine). This is Acetylserotonin O-methyltransferase 2 from Oryza sativa subsp. japonica (Rice).